A 192-amino-acid polypeptide reads, in one-letter code: Ion-translocating oxidoreductase complex subunit A (192 aa).

6 helical membrane passes run 5–25 (ALIL…FLGL), 39–59 (TGMG…SYLV), 65–85 (APLG…AAVV), 102–122 (VLGI…VALL), 134–154 (ALYG…FASI), and 171–191 (AIAL…IGLV).

The protein belongs to the NqrDE/RnfAE family. The complex is composed of six subunits: RnfA, RnfB, RnfC, RnfD, RnfE and RnfG.

Its subcellular location is the cell inner membrane. Part of a membrane-bound complex that couples electron transfer with translocation of ions across the membrane. The polypeptide is Ion-translocating oxidoreductase complex subunit A (Thioalkalivibrio sulfidiphilus (strain HL-EbGR7)).